Consider the following 627-residue polypeptide: Transducer protein MpcT (627 aa).

2 helical membrane-spanning segments follow: residues 28–48 (MLTA…LTVF) and 55–75 (LIGV…TYLI). 2 HAMP domains span residues 78–132 (ADFV…VASR) and 192–247 (EQLR…DTIS). A Methyl-accepting transducer domain is found at 266–502 (RVDAVADRSA…DVVGMVEEVA (237 aa)). A glutamate methyl ester (Glu) mark is found at Glu310, Glu416, and Glu507. Disordered stretches follow at residues 505 to 527 (SEET…DATD) and 557 to 627 (GTAD…ADSQ). Positions 580–590 (AAAVVDQPQPA) are enriched in low complexity.

This sequence belongs to the methyl-accepting chemotaxis (MCP) protein family. Interacts with CheA, CheY and CheW1. Post-translationally, methylated by CheR.

The protein localises to the cell membrane. Functionally, mediates bacteriorhodopsin- and halorhodopsin-dependent photoresponses by detecting membrane potential changes. Probably transduces the signal to the histidine kinase CheA. This chain is Transducer protein MpcT (mpcT), found in Halobacterium salinarum (strain ATCC 29341 / DSM 671 / R1).